The sequence spans 1261 residues: Apoptotic protease-activating factor 1 (1261 aa).

One can recognise a CARD domain in the interval 1–90 (MEERARSRLL…GDLASLLHSD (90 aa)). An NB-ARC domain is found at 106–417 (VSPSVQAILS…LELEEVEDVL (312 aa)). 154–161 (GMAGSGKS) is a binding site for ATP. 13 WD repeats span residues 615 to 654 (PHQG…KLLE), 657 to 696 (AHEE…LIRE), 700 to 743 (EHEE…SQNT), 746 to 785 (GHME…EWKS), 798 to 836 (EIKA…LLLK), 840 to 879 (SRLS…KKAE), 882 to 921 (GHLS…TSSA), 964 to 1003 (ELSS…ASVK), 1006 to 1045 (GHTK…CMVL), 1047 to 1088 (GHME…MLQD), 1091 to 1130 (CHEG…MLFL), 1133 to 1172 (GHKD…LLKI), and 1184 to 1223 (YHAG…QTFY).

As to quaternary structure, monomer. Oligomerizes upon binding of cytochrome c and dATP.

The protein localises to the cytoplasm. In terms of biological role, oligomeric Apaf-1 mediates the cytochrome c-dependent autocatalytic activation of pro-caspase-9 (Apaf-3), leading to the activation of caspase-3 and apoptosis. This activation requires ATP. This chain is Apoptotic protease-activating factor 1 (apaf1), found in Danio rerio (Zebrafish).